The chain runs to 229 residues: Large ribosomal subunit protein uL1 (229 aa).

It belongs to the universal ribosomal protein uL1 family. As to quaternary structure, part of the 50S ribosomal subunit.

In terms of biological role, binds directly to 23S rRNA. The L1 stalk is quite mobile in the ribosome, and is involved in E site tRNA release. Its function is as follows. Protein L1 is also a translational repressor protein, it controls the translation of the L11 operon by binding to its mRNA. The sequence is that of Large ribosomal subunit protein uL1 from Latilactobacillus sakei subsp. sakei (strain 23K) (Lactobacillus sakei subsp. sakei).